Here is an 856-residue protein sequence, read N- to C-terminus: DNA mismatch repair protein MutS (856 aa).

615-622 (GPNMGGKS) serves as a coordination point for ATP. Over residues 798-807 (ETTGHQQAIK) the composition is skewed to polar residues. A disordered region spans residues 798–817 (ETTGHQQAIKNPSKAPREEQ).

It belongs to the DNA mismatch repair MutS family.

Functionally, this protein is involved in the repair of mismatches in DNA. It is possible that it carries out the mismatch recognition step. This protein has a weak ATPase activity. The polypeptide is DNA mismatch repair protein MutS (Photobacterium profundum (strain SS9)).